We begin with the raw amino-acid sequence, 461 residues long: pre-mRNA splicing regulator USH1G (461 aa).

3 ANK repeats span residues 31–60 (DGMT…DPDK), 64–93 (WGNT…NIWC), and 97–126 (DYHT…KQSS). Disordered regions lie at residues 208 to 243 (GTAR…SARS) and 332 to 368 (EDGG…DRSC). Basic residues predominate over residues 210 to 222 (ARGKTKMQKKLER). The SAM domain maps to 385–447 (LEPETSPLET…KILGAVRRRR (63 aa)). At S422 the chain carries Phosphoserine; by CK2.

Part of a complex composed of USH1C, USH1G and MYO7A. Interacts with USH1C (via the first PDZ domain). Interacts with PDZD7. Interacts with CDH23 and PCDH15; these interactions may recruit USH1G to the plasma membrane. Interacts with intraflagellar transport proteins IFT20, IFT52 and IFT57. Interacts with splicing factors SF3B1, PRPF6, PRPF31 and SON. Interacts with the U4/U6.U5 tri-small nuclear ribonucleoprotein (tri-snRNP) complex in the presence of pre-mRNAs. Interacts (via SAM domain) with MAGI2 (via PDZ 6 domain); the interaction is triggered by phosphorylation of USH1G by CK2 and negatively regulates MAGI2-mediated endocytosis. Expressed in vestibule of the inner ear, eye and small intestine.

The protein localises to the cytoplasm. The protein resides in the cytosol. It localises to the cytoskeleton. It is found in the cell membrane. Its subcellular location is the cell projection. The protein localises to the cilium. The protein resides in the nucleus speckle. It localises to the nucleus. It is found in the cajal body. Its subcellular location is the microtubule organizing center. The protein localises to the centrosome. The protein resides in the photoreceptor inner segment. Its function is as follows. Plays a role in pre-mRNA splicing by regulating the release and transfer of U4/U6.U5 tri-small nuclear ribonucleoprotein (tri-snRNP) complexes from their assembly site in Cajal bodies to nuclear speckles, thereby contributing to the assembly of the pre-catalytic spliceosome on target pre-mRNAs. May also participate in recycling of snRNPs back to Cajal bodies during splicing. Plays a role in regulating MAGI2-mediated endocytosis. Anchoring/scaffolding protein that is a part of the functional network formed by USH1C, USH1G, CDH23 and MYO7A that mediates mechanotransduction in cochlear hair cells. Required for normal development and maintenance of cochlear hair cell bundles. Required for normal hearing. The sequence is that of pre-mRNA splicing regulator USH1G (USH1G) from Homo sapiens (Human).